Consider the following 538-residue polypeptide: Protein PNS1 (538 aa).

Positions 1–54 (MGESDAYYNGGQQQQYNGGYQQQYQPQPPAASYQAPPQQPYQQQPYQQGPPQNG) are enriched in low complexity. The disordered stretch occupies residues 1 to 67 (MGESDAYYNG…GNGYMPAQGY (67 aa)). Topologically, residues 1 to 88 (MGESDAYYNG…FKIAKPKYND (88 aa)) are cytoplasmic. Residues 89–109 (LWAGILLILVFAGFVVVSGLA) traverse the membrane as a helical segment. Residues 110–137 (LQGYSANKGNAGDGIYNNKNDFSPNTST) lie on the Extracellular side of the membrane. An N-linked (GlcNAc...) asparagine glycan is attached at asparagine 134. Residues 138 to 158 (VILFMFVLAVAFVLSYAYVWM) traverse the membrane as a helical segment. The Cytoplasmic portion of the chain corresponds to 159 to 165 (ARLFPKQ). Residues 166-186 (FIWVTGILNVCWAIGTAIFYL) form a helical membrane-spanning segment. Over 187 to 191 (WRKYW) the chain is Extracellular. Residues 192–212 (SAGIVFLIFGLFMAFCFWTWI) traverse the membrane as a helical segment. The Cytoplasmic portion of the chain corresponds to 213-239 (SRIPFSALMLKTTIDVSKKYGHVYLVS). A helical membrane pass occupies residues 240–260 (LIGGIIATAFSAWYAITLVGI). Residues 261-280 (YVKYQPAQDNPSCADGGCGK) lie on the Extracellular side of the membrane. A helical transmembrane segment spans residues 281–301 (GKVIGLIAFITFAMYWFSEWL). Over 302 to 335 (KNTIHTTIAGVYGSWYFNPHNFPKDATRASAKRA) the chain is Cytoplasmic. A helical transmembrane segment spans residues 336-356 (LTYSFGSIALGSLLVAIIQFL). The Extracellular portion of the chain corresponds to 357–372 (RQICNAARNQEGADGS). The chain crosses the membrane as a helical span at residues 373–393 (FVGYAIFCCISCLLGLLEWAV). Over 394-434 (EFINRYAFCHIALYGKAYFAAAKDTWKMIKDRGIDALINDC) the chain is Cytoplasmic. Residues 435 to 455 (LIGPVLSFGALFIAYACALLA) form a helical membrane-spanning segment. Residues 456–474 (YLYLYFTDPAYNSDGQYTA) are Extracellular-facing. Residues 475-495 (VVMAFSFLIGFQIANVFTTPI) form a helical membrane-spanning segment. Residues 496–538 (SSGIETIFVAAGWDPQVMWRDHPELYNEMVRVYPKVQQVIKDR) lie on the Cytoplasmic side of the membrane.

The protein belongs to the CTL (choline transporter-like) family.

The protein resides in the cell membrane. In terms of biological role, probably involved in transport through the plasma membrane. The polypeptide is Protein PNS1 (PNS1) (Gibberella zeae (strain ATCC MYA-4620 / CBS 123657 / FGSC 9075 / NRRL 31084 / PH-1) (Wheat head blight fungus)).